We begin with the raw amino-acid sequence, 142 residues long: Immunoglobulin iota chain (142 aa).

The first 19 residues, 1–19 (MAWTSVLLMLLAYLTGCGP), serve as a signal peptide directing secretion. The framework-1 stretch occupies residues 20–41 (QPMVHQPPLASSSLGATIRLSC). Cysteine 41 and cysteine 115 form a disulfide bridge. Residues 42-56 (TLSNDHNIGIYSIYW) are complementarity-determining-1. A framework-2 region spans residues 57-70 (YQQRPGHPPRFLLR). The tract at residues 71-81 (YFSHSDKHQGP) is complementarity-determining-2. A framework-3 region spans residues 82–115 (DIPPRFSGSKDTTRNLGYLSISELQPEDEAVYYC).

It belongs to the immunoglobulin superfamily. In terms of assembly, interacts with IGLL1. Interacts with SYNV1/HRD1 (via N-terminus); this interaction leads to increased VPREB1A ubiquitination and degradation in pre-B cells, possibly through a lysosomal, not proteasomal, pathway. In terms of tissue distribution, only expressed by pre-B-cells.

It localises to the endoplasmic reticulum. Functionally, associates with the Ig-mu chain to form a molecular complex that is expressed on the surface of pre-B-cells. This complex presumably regulates Ig gene rearrangements in the early steps of B-cell differentiation. The chain is Immunoglobulin iota chain from Mus musculus (Mouse).